A 170-amino-acid polypeptide reads, in one-letter code: Small ribosomal subunit protein uS9 (170 aa).

Residues 1 to 47 are disordered; that stretch reads MAETTPEQPLEEIDIDSYTTESEVPVEGEYTSESMASAFGEPQPAAG.

This sequence belongs to the universal ribosomal protein uS9 family.

In Streptomyces coelicolor (strain ATCC BAA-471 / A3(2) / M145), this protein is Small ribosomal subunit protein uS9 (rpsI).